Consider the following 190-residue polypeptide: Ion-translocating oxidoreductase complex subunit B (190 aa).

Residues 1-26 (MTALWIAIAALSALGLLFGLVLGYAA) form a hydrophobic region. The 4Fe-4S domain occupies 32–90 (EEDPVAEQVDEILPQSQCGQCGYPGCRPYAEAVANGEMINKCAPGGEQVMLKLAELLNV). [4Fe-4S] cluster contacts are provided by Cys49, Cys52, Cys57, Cys73, Cys115, Cys118, Cys121, Cys125, Cys145, Cys148, Cys151, and Cys155. 4Fe-4S ferredoxin-type domains follow at residues 106–135 (QVAYIDEANCIGCTKCIQACPVDAIVGATR) and 136–165 (AMHTVITDLCTGCDLCVAPCPTDCIEMRPV).

It belongs to the 4Fe4S bacterial-type ferredoxin family. RnfB subfamily. As to quaternary structure, the complex is composed of six subunits: RnfA, RnfB, RnfC, RnfD, RnfE and RnfG. [4Fe-4S] cluster serves as cofactor.

It is found in the cell inner membrane. Part of a membrane-bound complex that couples electron transfer with translocation of ions across the membrane. The sequence is that of Ion-translocating oxidoreductase complex subunit B from Serratia proteamaculans (strain 568).